The sequence spans 347 residues: Protein RecA (347 aa).

67–74 (GPESSGKT) provides a ligand contact to ATP. The interval 326-347 (DKLLPGRAPSSEAQGTESGQEA) is disordered. Polar residues predominate over residues 336–347 (SEAQGTESGQEA).

It belongs to the RecA family.

Its subcellular location is the cytoplasm. Functionally, can catalyze the hydrolysis of ATP in the presence of single-stranded DNA, the ATP-dependent uptake of single-stranded DNA by duplex DNA, and the ATP-dependent hybridization of homologous single-stranded DNAs. It interacts with LexA causing its activation and leading to its autocatalytic cleavage. The sequence is that of Protein RecA from Alkalilimnicola ehrlichii (strain ATCC BAA-1101 / DSM 17681 / MLHE-1).